A 372-amino-acid chain; its full sequence is Pepsin A (372 aa).

Residues 1–42 (MSVVKIPLVKKKSLRQNLIENGKLKEFMRTHKYNLGSKYIRE) constitute a propeptide, activation peptide. The Peptidase A1 domain occupies 60–369 (YFGTIGIGTP…DRGNNQIGLA (310 aa)). The active site involves aspartate 78. Residues cysteine 91 and cysteine 96 are joined by a disulfide bond. A Phosphoserine modification is found at serine 114. An intrachain disulfide couples cysteine 252 to cysteine 256. Aspartate 261 is a catalytic residue. A disulfide bond links cysteine 295 and cysteine 328.

Belongs to the peptidase A1 family.

It is found in the secreted. The enzyme catalyses Preferential cleavage: hydrophobic, preferably aromatic, residues in P1 and P1' positions. Cleaves 1-Phe-|-Val-2, 4-Gln-|-His-5, 13-Glu-|-Ala-14, 14-Ala-|-Leu-15, 15-Leu-|-Tyr-16, 16-Tyr-|-Leu-17, 23-Gly-|-Phe-24, 24-Phe-|-Phe-25 and 25-Phe-|-Tyr-26 bonds in the B chain of insulin.. Functionally, shows particularly broad specificity; although bonds involving phenylalanine and leucine are preferred, many others are also cleaved to some extent. This chain is Pepsin A (PGA), found in Bos taurus (Bovine).